The primary structure comprises 370 residues: Histidinol-phosphate aminotransferase (370 aa).

Position 231 is an N6-(pyridoxal phosphate)lysine (Lys231).

Belongs to the class-II pyridoxal-phosphate-dependent aminotransferase family. Histidinol-phosphate aminotransferase subfamily. As to quaternary structure, homodimer. It depends on pyridoxal 5'-phosphate as a cofactor.

It catalyses the reaction L-histidinol phosphate + 2-oxoglutarate = 3-(imidazol-4-yl)-2-oxopropyl phosphate + L-glutamate. It participates in amino-acid biosynthesis; L-histidine biosynthesis; L-histidine from 5-phospho-alpha-D-ribose 1-diphosphate: step 7/9. The protein is Histidinol-phosphate aminotransferase of Paracidovorax citrulli (strain AAC00-1) (Acidovorax citrulli).